The chain runs to 547 residues: Fimbria adhesin EcpD (547 aa).

The N-terminal stretch at 1–20 is a signal peptide; it reads MRVNLLIAMIIFALIWPATA.

It belongs to the EcpD/MatE family. In terms of assembly, forms polymers. Interacts with EcpA.

It localises to the fimbrium. In terms of biological role, part of the ecpRABCDE operon, which encodes the E.coli common pilus (ECP). ECP is found in both commensal and pathogenic strains and plays a dual role in early-stage biofilm development and host cell recognition. Tip pilus adhesin, which is required for assembly of EcpA into fibers. The chain is Fimbria adhesin EcpD (ecpD) from Escherichia coli O18:K1:H7 (strain IHE3034 / ExPEC).